Reading from the N-terminus, the 199-residue chain is Pneumococcal vaccine antigen A homolog (199 aa).

It localises to the cell surface. This is Pneumococcal vaccine antigen A homolog (pvaA) from Streptococcus pyogenes serotype M18 (strain MGAS8232).